We begin with the raw amino-acid sequence, 813 residues long: UPF0508 protein KLLA0A06237g (813 aa).

Positions 478 to 537 (KKDKSKSQKNSTDSLAKLSDTKSIHPPESAMSSHASTPSSTSKSSKSSKSSSTLSPSTCK) are disordered. The segment covering 506–537 (SAMSSHASTPSSTSKSSKSSKSSSTLSPSTCK) has biased composition (low complexity).

The protein belongs to the UPF0508 family.

This Kluyveromyces lactis (strain ATCC 8585 / CBS 2359 / DSM 70799 / NBRC 1267 / NRRL Y-1140 / WM37) (Yeast) protein is UPF0508 protein KLLA0A06237g.